A 139-amino-acid chain; its full sequence is Nucleoside diphosphate kinase (139 aa).

ATP contacts are provided by lysine 10, phenylalanine 58, arginine 86, threonine 92, arginine 103, and asparagine 113. Histidine 116 (pros-phosphohistidine intermediate) is an active-site residue.

It belongs to the NDK family. Homotetramer. The cofactor is Mg(2+).

It localises to the cytoplasm. The enzyme catalyses a 2'-deoxyribonucleoside 5'-diphosphate + ATP = a 2'-deoxyribonucleoside 5'-triphosphate + ADP. It catalyses the reaction a ribonucleoside 5'-diphosphate + ATP = a ribonucleoside 5'-triphosphate + ADP. Its function is as follows. Major role in the synthesis of nucleoside triphosphates other than ATP. The ATP gamma phosphate is transferred to the NDP beta phosphate via a ping-pong mechanism, using a phosphorylated active-site intermediate. In Caulobacter sp. (strain K31), this protein is Nucleoside diphosphate kinase.